A 102-amino-acid polypeptide reads, in one-letter code: MNTLTTYLVIAAVLFCLGLLGILQRRNLVGMLISLELMLNGANLNFMAFNRFLAPEPAVGQIIALIVMGLAAAEAAIGLSIIFALFRRMHSINVERAQELRG.

3 helical membrane passes run 3–23 (TLTT…LGIL), 29–49 (VGML…FMAF), and 62–82 (IIAL…LSII).

This sequence belongs to the complex I subunit 4L family. In terms of assembly, NDH-1 is composed of 14 different subunits. Subunits NuoA, H, J, K, L, M, N constitute the membrane sector of the complex.

The protein resides in the cell inner membrane. The enzyme catalyses a quinone + NADH + 5 H(+)(in) = a quinol + NAD(+) + 4 H(+)(out). NDH-1 shuttles electrons from NADH, via FMN and iron-sulfur (Fe-S) centers, to quinones in the respiratory chain. The immediate electron acceptor for the enzyme in this species is believed to be ubiquinone. Couples the redox reaction to proton translocation (for every two electrons transferred, four hydrogen ions are translocated across the cytoplasmic membrane), and thus conserves the redox energy in a proton gradient. The polypeptide is NADH-quinone oxidoreductase subunit K 1 (Syntrophobacter fumaroxidans (strain DSM 10017 / MPOB)).